The following is a 510-amino-acid chain: 2,3-bisphosphoglycerate-independent phosphoglycerate mutase (510 aa).

Residues Asp11 and Ser61 each coordinate Mn(2+). The Phosphoserine intermediate role is filled by Ser61. Substrate-binding positions include His124, 154–155 (RD), Arg185, Arg191, 260–263 (RPDR), and Lys333. Mn(2+)-binding residues include Asp398, His402, Asp439, His440, and His457.

Belongs to the BPG-independent phosphoglycerate mutase family. Monomer. It depends on Mn(2+) as a cofactor.

It catalyses the reaction (2R)-2-phosphoglycerate = (2R)-3-phosphoglycerate. It participates in carbohydrate degradation; glycolysis; pyruvate from D-glyceraldehyde 3-phosphate: step 3/5. Functionally, catalyzes the interconversion of 2-phosphoglycerate and 3-phosphoglycerate. This Mycoplasma mobile (strain ATCC 43663 / 163K / NCTC 11711) (Mesomycoplasma mobile) protein is 2,3-bisphosphoglycerate-independent phosphoglycerate mutase.